Here is a 315-residue protein sequence, read N- to C-terminus: Olfactory receptor 5M1 (315 aa).

Topologically, residues 1–25 (MFSPNHTIVTEFILLGLTDDPVLEK) are extracellular. Asparagine 5 carries N-linked (GlcNAc...) asparagine glycosylation. Residues 26–46 (ILFGVFLAIYLITLAGNLCMI) traverse the membrane as a helical segment. Topologically, residues 47 to 54 (LLIRTNSH) are cytoplasmic. The chain crosses the membrane as a helical span at residues 55 to 75 (LQTPMYFFLGHLSFVDICYSS). Over 76–99 (NVTPNMLHNFLSEQKTISYAGCFT) the chain is Extracellular. The cysteines at positions 97 and 189 are disulfide-linked. A helical transmembrane segment spans residues 100 to 120 (QCLLFIALVITEFYILASMAL). The Cytoplasmic portion of the chain corresponds to 121–139 (DRYVAICSPLHYSSRMSKN). Residues 140–160 (ICVCLVTIPYMYGFLSGFSQS) traverse the membrane as a helical segment. Residues 161 to 196 (LLTFHLSFCGSLEINHFYCADPPLIMLACSDTRVKK) are Extracellular-facing. The chain crosses the membrane as a helical span at residues 197–217 (MAMFVVAGFNLSSSLFIILLS). Over 218–237 (YLFIFAAIFRIRSAEGRHKA) the chain is Cytoplasmic. A helical membrane pass occupies residues 238–258 (FSTCASHLTIVTLFYGTLFCM). Residues 259-271 (YVRPPSEKSVEES) are Extracellular-facing. The chain crosses the membrane as a helical span at residues 272–292 (KITAVFYTFLSPMLNPLIYSL). Residues 293 to 315 (RNTDVILAMQQMIRGKSFHKIAV) are Cytoplasmic-facing.

This sequence belongs to the G-protein coupled receptor 1 family.

Its subcellular location is the cell membrane. Odorant receptor. The polypeptide is Olfactory receptor 5M1 (OR5M1) (Homo sapiens (Human)).